The sequence spans 354 residues: UPF0597 protein PPA0217 (354 aa).

It belongs to the UPF0597 family.

This Cutibacterium acnes (strain DSM 16379 / KPA171202) (Propionibacterium acnes) protein is UPF0597 protein PPA0217.